A 333-amino-acid polypeptide reads, in one-letter code: Bifunctional phosphoglucose/phosphomannose isomerase (333 aa).

The SIS domain maps to L22–A160. Positions 39, 40, 84, 86, 89, and 136 each coordinate D-fructose 6-phosphate. Residue E211 is the Proton acceptor of the active site. Residues H227 and K322 each contribute to the D-fructose 6-phosphate site. The active-site Proton donor is H227. K322 serves as the catalytic Proton acceptor.

It belongs to the PGI/PMI family. In terms of assembly, homodimer.

It catalyses the reaction alpha-D-glucose 6-phosphate = beta-D-fructose 6-phosphate. The catalysed reaction is D-mannose 6-phosphate = D-fructose 6-phosphate. Its activity is regulated as follows. Inhibited by low concentrations of erythrose 4-phosphate and 6-phosphogluconate. Functionally, dual specificity isomerase that catalyzes the isomerization of both glucose-6-phosphate and mannose-6-phosphate to fructose-6-phosphate with similar catalytic efficiency. This is Bifunctional phosphoglucose/phosphomannose isomerase from Aeropyrum pernix (strain ATCC 700893 / DSM 11879 / JCM 9820 / NBRC 100138 / K1).